Reading from the N-terminus, the 333-residue chain is tRNA pseudouridine synthase B (333 aa).

The Nucleophile role is filled by Asp-46.

It belongs to the pseudouridine synthase TruB family. Type 1 subfamily.

The enzyme catalyses uridine(55) in tRNA = pseudouridine(55) in tRNA. Functionally, responsible for synthesis of pseudouridine from uracil-55 in the psi GC loop of transfer RNAs. The chain is tRNA pseudouridine synthase B from Gluconobacter oxydans (strain 621H) (Gluconobacter suboxydans).